A 742-amino-acid polypeptide reads, in one-letter code: Probable LRR receptor-like serine/threonine-protein kinase At2g02780 (742 aa).

An N-terminal signal peptide occupies residues 1 to 25; it reads MQISLQIHLSSFTFLLLIFLLPVLS. At 26–354 the chain is on the extracellular side; sequence ESQVASSESQ…KDSARIKLGL (329 aa). LRR repeat units follow at residues 74–96, 104–128, 130–154, 156–177, 178–204, 206–223, 224–247, 249–271, and 273–294; these read HGHV…SFHK, LSSL…IITK, SPSL…IVSL, NLKS…DLRG, LSNL…KLTT, SLKN…IKKL, NNLQ…LFSI, SLQI…SCTS, and KIIT…CYSS. An N-linked (GlcNAc...) asparagine glycan is attached at asparagine 85. An N-linked (GlcNAc...) asparagine glycan is attached at asparagine 137. N-linked (GlcNAc...) asparagine glycosylation occurs at asparagine 209. An N-linked (GlcNAc...) asparagine glycan is attached at asparagine 266. N-linked (GlcNAc...) asparagine glycosylation occurs at asparagine 299. The chain crosses the membrane as a helical span at residues 355 to 375; the sequence is VILIIIGVIILAAILVLLVLI. The Cytoplasmic segment spans residues 376 to 742; it reads ALKRRRSRSE…HESSMKAIYE (367 aa). Positions 386-424 are disordered; it reads DDPFEVNNSNNERHASDKVSVCSTTTASSKSLPDSRRVP. The span at 406–417 shows a compositional bias: polar residues; that stretch reads VCSTTTASSKSL. The region spanning 426 to 720 is the Protein kinase domain; it reads TMRSAVIGLP…DVVWNLQYTI (295 aa).

The protein belongs to the protein kinase superfamily. Ser/Thr protein kinase family.

The protein localises to the membrane. The catalysed reaction is L-seryl-[protein] + ATP = O-phospho-L-seryl-[protein] + ADP + H(+). It carries out the reaction L-threonyl-[protein] + ATP = O-phospho-L-threonyl-[protein] + ADP + H(+). This Arabidopsis thaliana (Mouse-ear cress) protein is Probable LRR receptor-like serine/threonine-protein kinase At2g02780.